We begin with the raw amino-acid sequence, 392 residues long: Alanine--glyoxylate aminotransferase (392 aa).

Position 9 is a phosphothreonine (T9). N6-(pyridoxal phosphate)lysine is present on K209. Residue K225 is modified to N6-acetyllysine; alternate. The residue at position 225 (K225) is an N6-succinyllysine; alternate. 2 positions are modified to N6-acetyllysine: K234 and K312. A substrate-binding site is contributed by R360.

It belongs to the class-V pyridoxal-phosphate-dependent aminotransferase family. As to quaternary structure, homodimer. Pyridoxal 5'-phosphate is required as a cofactor. As to expression, liver.

It is found in the peroxisome. It catalyses the reaction L-serine + pyruvate = 3-hydroxypyruvate + L-alanine. The enzyme catalyses glyoxylate + L-alanine = glycine + pyruvate. With respect to regulation, alanine--glyoxylate aminotransferase activity is inhibited by 1 mM (aminooxy)acetic acid by 97.5%. In terms of biological role, peroxisomal aminotransferase that catalyzes the transamination of glyoxylate to glycine and contributes to the glyoxylate detoxification. Also catalyzes the transamination between L-serine and pyruvate and contributes to gluconeogenesis from the L-serine metabolism. This Homo sapiens (Human) protein is Alanine--glyoxylate aminotransferase.